The following is an 85-amino-acid chain: Homeobox protein liguleless 3 (85 aa).

The ELK domain occupies 1-21 (ELKEMLLKKYSGCLSRLRSEF). The segment at residues 22 to 85 (LKKRKKGKLP…NQRKRHWKPS (64 aa)) is a DNA-binding region (homeobox; TALE-type).

It belongs to the TALE/KNOX homeobox family.

The protein resides in the nucleus. In terms of biological role, probably binds to the DNA sequence 5'-TGAC-3'. The protein is Homeobox protein liguleless 3 (LG3) of Zea mays (Maize).